The sequence spans 124 residues: Small ribosomal subunit protein uS12 (124 aa).

D89 bears the 3-methylthioaspartic acid mark.

Belongs to the universal ribosomal protein uS12 family. As to quaternary structure, part of the 30S ribosomal subunit. Contacts proteins S8 and S17. May interact with IF1 in the 30S initiation complex.

With S4 and S5 plays an important role in translational accuracy. Its function is as follows. Interacts with and stabilizes bases of the 16S rRNA that are involved in tRNA selection in the A site and with the mRNA backbone. Located at the interface of the 30S and 50S subunits, it traverses the body of the 30S subunit contacting proteins on the other side and probably holding the rRNA structure together. The combined cluster of proteins S8, S12 and S17 appears to hold together the shoulder and platform of the 30S subunit. This chain is Small ribosomal subunit protein uS12, found in Edwardsiella ictaluri (strain 93-146).